The following is an 806-amino-acid chain: Leucine--tRNA ligase (806 aa).

Residues 38 to 48 carry the 'HIGH' region motif; sequence PYPSGEIHMGH. The 'KMSKS' region signature appears at 572-576; that stretch reads KMSKS. ATP is bound at residue K575.

Belongs to the class-I aminoacyl-tRNA synthetase family.

The protein resides in the cytoplasm. The enzyme catalyses tRNA(Leu) + L-leucine + ATP = L-leucyl-tRNA(Leu) + AMP + diphosphate. In Helicobacter pylori (strain ATCC 700392 / 26695) (Campylobacter pylori), this protein is Leucine--tRNA ligase.